Here is a 207-residue protein sequence, read N- to C-terminus: Superoxide dismutase [Mn] (207 aa).

Histidine 28, histidine 76, aspartate 160, and histidine 164 together coordinate Mn(2+).

This sequence belongs to the iron/manganese superoxide dismutase family. Mn(2+) serves as cofactor.

The enzyme catalyses 2 superoxide + 2 H(+) = H2O2 + O2. Destroys superoxide anion radicals which are normally produced within the cells and which are toxic to biological systems. This is Superoxide dismutase [Mn] (sodA) from Nocardia asteroides.